The primary structure comprises 365 residues: Palmitoyltransferase ZDHHC20 (365 aa).

The Cytoplasmic portion of the chain corresponds to 1-14; the sequence is MAPWTLWRCCQRVV. Residues 15 to 35 traverse the membrane as a helical segment; sequence GWVPVLFITFVVVWSYYAYVV. Residues 36–53 are Lumenal-facing; the sequence is ELCVFTIFGNEENGKTVV. Residues 54-74 traverse the membrane as a helical segment; that stretch reads YLVAFHLFFVMFVWSYWMTIF. Topologically, residues 75–169 are cytoplasmic; that stretch reads TSPASPSKEF…NNCVGFSNYK (95 aa). Residues 126–176 form the DHHC domain; sequence RYCEKCQLIKPDRAHHCSACDSCILKMDHHCPWVNNCVGFSNYKFFLLFLL. Zn(2+) is bound by residues Cys-128 and Cys-131. Residues Lys-135 and 140–143 each bind substrate; that span reads HHCS. His-141, Cys-142, Cys-145, Cys-148, and His-155 together coordinate Zn(2+). The active-site S-palmitoyl cysteine intermediate is the Cys-156. A Zn(2+)-binding site is contributed by Cys-162. Residues 170–190 traverse the membrane as a helical segment; it reads FFLLFLLYSLLYCLFVAATVL. The Lumenal segment spans residues 191–207; the sequence is EYFIKFWTNELTDTRAK. Residues 208–231 form a helical membrane-spanning segment; it reads FHVLFLFFVSAMFFISVLSLFSYH. Over 232–365 the chain is Cytoplasmic; sequence CWLVGKNRTT…NNHVTVAIEN (134 aa). A phosphoserine mark is found at Ser-305, Ser-330, and Ser-339.

Belongs to the DHHC palmitoyltransferase family. Autopalmitoylated (in vitro).

It localises to the golgi apparatus membrane. Its subcellular location is the cell membrane. The protein resides in the cytoplasm. It is found in the perinuclear region. The protein localises to the endoplasmic reticulum membrane. It localises to the endoplasmic reticulum-Golgi intermediate compartment membrane. It carries out the reaction L-cysteinyl-[protein] + hexadecanoyl-CoA = S-hexadecanoyl-L-cysteinyl-[protein] + CoA. It catalyses the reaction L-cysteinyl-[protein] + tetradecanoyl-CoA = S-tetradecanoyl-L-cysteinyl-[protein] + CoA. The catalysed reaction is L-cysteinyl-[protein] + octadecanoyl-CoA = S-octadecanoyl-L-cysteinyl-[protein] + CoA. Palmitoyltransferase that could catalyze the addition of palmitate onto various protein substrates. Catalyzes palmitoylation of Cys residues in the cytoplasmic C-terminus of EGFR, and modulates the duration of EGFR signaling by modulating palmitoylation-dependent EGFR internalization and degradation. Has a preference for acyl-CoA with C16 fatty acid chains. Can also utilize acyl-CoA with C14 and C18 fatty acid chains. May palmitoylate CALHM1 subunit of gustatory voltage-gated ion channels and modulate channel gating and kinetics. Its function is as follows. (Microbial infection) Dominant palmitoyltransferase responsible for lipidation of SARS coronavirus-2/SARS-CoV-2 spike protein. Through a sequential action with ZDHHC9, rapidly and efficiently palmitoylates spike protein following its synthesis in the endoplasmic reticulum (ER). In the infected cell, promotes spike biogenesis by protecting it from premature ER degradation, increases half-life and controls the lipid organization of its immediate membrane environment. Once the virus has formed, spike palmitoylation controls fusion with the target cell. This chain is Palmitoyltransferase ZDHHC20, found in Homo sapiens (Human).